Here is a 259-residue protein sequence, read N- to C-terminus: Eukaryotic translation initiation factor 3 subunit G-2 (259 aa).

The 79-residue stretch at 179-257 folds into the RRM domain; that stretch reads SAVRISNLSE…LILSVEWSKP (79 aa).

The protein belongs to the eIF-3 subunit G family. Component of the eukaryotic translation initiation factor 3 (eIF-3) complex. The eIF-3 complex interacts with pix.

Its subcellular location is the cytoplasm. Its function is as follows. RNA-binding component of the eukaryotic translation initiation factor 3 (eIF-3) complex, which is involved in protein synthesis of a specialized repertoire of mRNAs and, together with other initiation factors, stimulates binding of mRNA and methionyl-tRNAi to the 40S ribosome. The eIF-3 complex specifically targets and initiates translation of a subset of mRNAs involved in cell proliferation. This subunit can bind 18S rRNA. The protein is Eukaryotic translation initiation factor 3 subunit G-2 of Drosophila virilis (Fruit fly).